Reading from the N-terminus, the 178-residue chain is Large ribosomal subunit protein uL6 (178 aa).

This sequence belongs to the universal ribosomal protein uL6 family. In terms of assembly, part of the 50S ribosomal subunit.

In terms of biological role, this protein binds to the 23S rRNA, and is important in its secondary structure. It is located near the subunit interface in the base of the L7/L12 stalk, and near the tRNA binding site of the peptidyltransferase center. In Corynebacterium jeikeium (strain K411), this protein is Large ribosomal subunit protein uL6.